The primary structure comprises 160 residues: uncharacterized protein (160 aa).

A run of 4 helical transmembrane segments spans residues 7–27, 48–68, 95–115, and 121–141; these read IFLK…CIFL, LVFI…YQAF, AVTI…MAEI, and IIVI…FAAV.

Its subcellular location is the cell membrane. This is an uncharacterized protein from Bacillus subtilis (strain 168).